Consider the following 165-residue polypeptide: Heme oxygenase (165 aa).

The protein belongs to the heme oxygenase family.

The enzyme catalyses heme b + 3 reduced [NADPH--hemoprotein reductase] + 3 O2 = biliverdin IXalpha + CO + Fe(2+) + 3 oxidized [NADPH--hemoprotein reductase] + 3 H2O + H(+). Catalyzes the opening of the heme ring to form the open-chain tetrapyrrole biliverdin IX with the release of iron and carbon monoxide (CO). In Xanthomonas campestris pv. campestris (strain 8004), this protein is Heme oxygenase (bphO).